We begin with the raw amino-acid sequence, 263 residues long: Acetylglutamate kinase (263 aa).

Substrate is bound by residues 48–49 (GG), Arg-70, and Asn-162.

The protein belongs to the acetylglutamate kinase family. ArgB subfamily.

The protein resides in the cytoplasm. The catalysed reaction is N-acetyl-L-glutamate + ATP = N-acetyl-L-glutamyl 5-phosphate + ADP. It participates in amino-acid biosynthesis; L-arginine biosynthesis; N(2)-acetyl-L-ornithine from L-glutamate: step 2/4. Catalyzes the ATP-dependent phosphorylation of N-acetyl-L-glutamate. In Vibrio vulnificus (strain CMCP6), this protein is Acetylglutamate kinase.